The primary structure comprises 313 residues: MTSIIFMGTPDFSAPILRMLHEEGYDIKAVVTQPDRPVGRKRILTPPPVKAAALELGLPIIQPEKLRGSEELQQILSLQPDIVITAAFGQILPKELLDAPSLGCINVHASLLPKYRGGAPIHQAIIDGEKETGVTIMYMAEKLDAGDIISQRAIPIELDDHTGRVFDKLSMVGRDLLKDTLPSIINRTNNRTVQDETQVTFASNISREQERIDWTNDATTLYNQVRGLHPWPVAYTTFEDGNFKVWWATIGKSKHDTIPGTVVAIAKDHFEVAAGNGTTLALYDVQPAGKKRMTAEEYLRGTGSKLQIGDQFK.

Residue 110 to 113 (SLLP) coordinates (6S)-5,6,7,8-tetrahydrofolate.

Belongs to the Fmt family.

The catalysed reaction is L-methionyl-tRNA(fMet) + (6R)-10-formyltetrahydrofolate = N-formyl-L-methionyl-tRNA(fMet) + (6S)-5,6,7,8-tetrahydrofolate + H(+). Its function is as follows. Attaches a formyl group to the free amino group of methionyl-tRNA(fMet). The formyl group appears to play a dual role in the initiator identity of N-formylmethionyl-tRNA by promoting its recognition by IF2 and preventing the misappropriation of this tRNA by the elongation apparatus. This chain is Methionyl-tRNA formyltransferase, found in Lysinibacillus sphaericus (strain C3-41).